The following is a 467-amino-acid chain: Glutamate--tRNA ligase (467 aa).

The 'HIGH' region signature appears at 15–25; sequence PSPTGYLHVGG. The short motif at 249–253 is the 'KMSKS' region element; the sequence is KLSKR. Lys-252 is a binding site for ATP.

Belongs to the class-I aminoacyl-tRNA synthetase family. Glutamate--tRNA ligase type 1 subfamily. As to quaternary structure, monomer.

It localises to the cytoplasm. It catalyses the reaction tRNA(Glu) + L-glutamate + ATP = L-glutamyl-tRNA(Glu) + AMP + diphosphate. Catalyzes the attachment of glutamate to tRNA(Glu) in a two-step reaction: glutamate is first activated by ATP to form Glu-AMP and then transferred to the acceptor end of tRNA(Glu). The polypeptide is Glutamate--tRNA ligase (Coprothermobacter proteolyticus (strain ATCC 35245 / DSM 5265 / OCM 4 / BT)).